Here is a 337-residue protein sequence, read N- to C-terminus: Probable uridine nucleosidase 2 (337 aa).

Residue histidine 260 is part of the active site.

It belongs to the IUNH family.

Its subcellular location is the cytoplasm. The catalysed reaction is uridine + H2O = D-ribose + uracil. Functionally, involved in pyrimidine breakdown. In Oryza sativa subsp. japonica (Rice), this protein is Probable uridine nucleosidase 2 (URH2).